The chain runs to 31 residues: Cliotide T13 (31 aa).

Residues 1–31 (DTTPCGESCVWIPCVSSIVGCSCQNKVCYQN) constitute a cross-link (cyclopeptide (Asp-Asn)). 3 disulfides stabilise this stretch: Cys-5-Cys-21, Cys-9-Cys-23, and Cys-14-Cys-28.

Post-translationally, contains 3 disulfide bonds. This is a cyclic peptide. As to expression, expressed in seed but not in root nodules.

Its function is as follows. Probably participates in a plant defense mechanism. Not active against Gram-negative bacterium E.coli ATCC 700926 or Gram-positive bacterium S.aureus ATCC 12600 up to a concentration of 100 uM under low-salt conditions. The protein is Cliotide T13 of Clitoria ternatea (Butterfly pea).